Reading from the N-terminus, the 225-residue chain is Recoverin family protein DDB_G0274781 (225 aa).

Positions 1–13 (MGNKQGKSPNNSK) are enriched in low complexity. Residues 1-20 (MGNKQGKSPNNSKGGKKYKI) form a disordered region. Glycine 2 carries N-myristoyl glycine lipidation. EF-hand domains lie at 78-113 (DNSP…LCKG), 114-149 (TAEE…AWIS), and 174-209 (MAQI…HPKI). Aspartate 91, asparagine 93, aspartate 95, threonine 97, glutamate 102, aspartate 127, aspartate 129, asparagine 131, tyrosine 133, glutamate 138, aspartate 187, asparagine 189, aspartate 191, lysine 193, and glutamate 198 together coordinate Ca(2+).

The protein belongs to the recoverin family.

This chain is Recoverin family protein DDB_G0274781, found in Dictyostelium discoideum (Social amoeba).